Consider the following 148-residue polypeptide: MRKLDRVDMQLVKILSENSRLTYRELADILNTTRQRIARRIDKLKKLGIIRKFTIIPDIDKLGYMYAIVLIKSKVPSDADKVISEISDIEYVKSVEKGVGRYNIIVRLLLPKDIKDAENLISEFLQRIKNAENVEVILISEVRKFEII.

One can recognise an HTH asnC-type domain in the interval Leu-4–Met-65. The segment at residues Tyr-23–Asp-42 is a DNA-binding region (H-T-H motif).

This is an uncharacterized protein from Pyrococcus horikoshii (strain ATCC 700860 / DSM 12428 / JCM 9974 / NBRC 100139 / OT-3).